The chain runs to 65 residues: Large ribosomal subunit protein bL35 (65 aa).

The protein belongs to the bacterial ribosomal protein bL35 family.

This is Large ribosomal subunit protein bL35 from Laribacter hongkongensis (strain HLHK9).